The sequence spans 506 residues: Ecdysteroid UDP-glucosyltransferase (506 aa).

The first 18 residues, 1–18 (MTAYLIVFCLCCWSAARS), serve as a signal peptide directing secretion.

This sequence belongs to the UDP-glycosyltransferase family.

In terms of biological role, catalyzes the transfer of glucose from UDP-glucose to ecdysteroids which are insect molting hormones. Expression of egt interferes with normal insect development and block molting. The sequence is that of Ecdysteroid UDP-glucosyltransferase (EGT) from Lymantria dispar multicapsid nuclear polyhedrosis virus (LdMNPV).